A 221-amino-acid polypeptide reads, in one-letter code: Antigenic protein SchS34 (221 aa).

4 N-linked (GlcNAc...) asparagine glycosylation sites follow: asparagine 27, asparagine 69, asparagine 141, and asparagine 215.

As to expression, expressed in the mycelium (at protein level).

It localises to the secreted. It is found in the spore. Its subcellular location is the spore wall. The protein localises to the cytoplasm. This chain is Antigenic protein SchS34, found in Stachybotrys chartarum (Toxic black mold).